Consider the following 579-residue polypeptide: Glutamine--tRNA ligase (579 aa).

A 'HIGH' region motif is present at residues 41–51 (PEPNGYLHIGH). ATP contacts are provided by residues 42–44 (EPN) and 48–54 (HIGHAKA). Positions 74 and 218 each coordinate L-glutamine. Residues T237, 285–286 (RL), and 293–295 (MSK) each bind ATP. Positions 292–296 (VMSKR) match the 'KMSKS' region motif.

The protein belongs to the class-I aminoacyl-tRNA synthetase family. In terms of assembly, monomer.

The protein localises to the cytoplasm. The enzyme catalyses tRNA(Gln) + L-glutamine + ATP = L-glutaminyl-tRNA(Gln) + AMP + diphosphate. In Xanthomonas oryzae pv. oryzae (strain MAFF 311018), this protein is Glutamine--tRNA ligase.